We begin with the raw amino-acid sequence, 317 residues long: Melanocyte-stimulating hormone receptor (317 aa).

Over 1–37 the chain is Extracellular; the sequence is MPVQGSQRRLLGSLNSTPTATPHLGLAANQTGARCLE. N-linked (GlcNAc...) asparagine glycosylation occurs at Asn-29. Residues 38 to 63 form a helical membrane-spanning segment; sequence VSIPDGLFLSLGLVSLVENVLVVTAI. The Cytoplasmic segment spans residues 64–72; that stretch reads AKNRNLHSP. Residues 73-93 traverse the membrane as a helical segment; sequence MYCFICCLALSDLLVSGSNML. The Extracellular segment spans residues 94–118; it reads ETAVTLLLEAGALAARAAVVQQLDN. A helical membrane pass occupies residues 119–140; the sequence is VIDVITCSSMLSSLCFLGAIAV. Residues 141–163 are Cytoplasmic-facing; sequence DRYISIFYALRYHSIVTLPRARR. Residues 164 to 183 traverse the membrane as a helical segment; the sequence is AVAAIWVASVLFSMLFIAYY. Over 184 to 191 the chain is Extracellular; it reads DHAAVLLC. A helical transmembrane segment spans residues 192-211; it reads LVVFFLAMLVLMAVLYVHML. The Cytoplasmic segment spans residues 212 to 240; the sequence is ARACQHAQGIARLHKRQRPAHQGFGLKGA. The helical transmembrane segment at 241–266 threads the bilayer; sequence ATLTILLGIFFLCWGPFFLHLTLIVL. Residues 267–279 are Extracellular-facing; sequence CPQHPTCSCIFKN. A helical transmembrane segment spans residues 280-300; sequence FNLFLALIICNAIIDPLIYAF. The Cytoplasmic segment spans residues 301–317; it reads RSQELRRTLKEVLLCSW. Cys-315 carries the S-palmitoyl cysteine lipid modification.

It belongs to the G-protein coupled receptor 1 family. In terms of assembly, interacts with MGRN1, but does not undergo MGRN1-mediated ubiquitination; this interaction competes with GNAS-binding and thus inhibits agonist-induced cAMP production. Interacts with OPN3; the interaction results in a decrease in MC1R-mediated cAMP signaling and ultimately a decrease in melanin production in melanocytes.

It is found in the cell membrane. In terms of biological role, receptor for MSH (alpha, beta and gamma) and ACTH. The activity of this receptor is mediated by G proteins which activate adenylate cyclase. Mediates melanogenesis, the production of eumelanin (black/brown) and phaeomelanin (red/yellow), via regulation of cAMP signaling in melanocytes. The polypeptide is Melanocyte-stimulating hormone receptor (MC1R) (Miopithecus talapoin (Angolan talapoin)).